Consider the following 255-residue polypeptide: Sushi domain-containing protein 3 (255 aa).

Residues 1-25 are disordered; that stretch reads MRWAAATLRGKARPRGRAGVTTPAP. The Extracellular portion of the chain corresponds to 1–103; sequence MRWAAATLRG…VPPHETFGFK (103 aa). N-linked (GlcNAc...) asparagine glycosylation is present at Asn-27. Residues 30–93 enclose the Sushi domain; that stretch reads GTCAKLRLPP…WSSGSPVCKL (64 aa). Cystine bridges form between Cys-32/Cys-75 and Cys-61/Cys-91. Residues 104–124 traverse the membrane as a helical segment; sequence VAVIASIVSCAIILLMSMAFL. At 125-255 the chain is on the cytoplasmic side; that stretch reads TCCLLKCVKK…PQQPAAYALG (131 aa). A disordered region spans residues 173–255; that stretch reads SGPSQAHDNH…PQQPAAYALG (83 aa). Positions 179–191 are enriched in basic and acidic residues; it reads HDNHSFTTDHGES.

In terms of tissue distribution, highly expressed in estrogen receptor-positive breast tumors.

The protein localises to the cell membrane. Its function is as follows. May play a role in breast tumorigenesis by promoting estrogen-dependent cell proliferation, cell-cell interactions and migration. This Homo sapiens (Human) protein is Sushi domain-containing protein 3 (SUSD3).